Reading from the N-terminus, the 257-residue chain is Zinc import ATP-binding protein ZnuC (257 aa).

In terms of domain architecture, ABC transporter spans 6-221 (IRLEQVGVSF…PAFVELFGQN (216 aa)). Position 38-45 (38-45 (GPNGAGKT)) interacts with ATP.

It belongs to the ABC transporter superfamily. Zinc importer (TC 3.A.1.15.5) family. As to quaternary structure, the complex is composed of two ATP-binding proteins (ZnuC), two transmembrane proteins (ZnuB) and a solute-binding protein (ZnuA).

It localises to the cell inner membrane. It catalyses the reaction Zn(2+)(out) + ATP(in) + H2O(in) = Zn(2+)(in) + ADP(in) + phosphate(in) + H(+)(in). In terms of biological role, part of the ABC transporter complex ZnuABC involved in zinc import. Responsible for energy coupling to the transport system. This is Zinc import ATP-binding protein ZnuC from Pseudomonas entomophila (strain L48).